The following is a 1373-amino-acid chain: DNA-directed RNA polymerase subunit beta'' (1373 aa).

Residues C220, C291, C298, and C301 each coordinate Zn(2+).

The protein belongs to the RNA polymerase beta' chain family. RpoC2 subfamily. In terms of assembly, in plastids the minimal PEP RNA polymerase catalytic core is composed of four subunits: alpha, beta, beta', and beta''. When a (nuclear-encoded) sigma factor is associated with the core the holoenzyme is formed, which can initiate transcription. It depends on Zn(2+) as a cofactor.

The protein resides in the plastid. It localises to the chloroplast. It catalyses the reaction RNA(n) + a ribonucleoside 5'-triphosphate = RNA(n+1) + diphosphate. DNA-dependent RNA polymerase catalyzes the transcription of DNA into RNA using the four ribonucleoside triphosphates as substrates. The chain is DNA-directed RNA polymerase subunit beta'' from Silene latifolia (White campion).